A 95-amino-acid polypeptide reads, in one-letter code: Aspartyl/glutamyl-tRNA(Asn/Gln) amidotransferase subunit C (95 aa).

It belongs to the GatC family. Heterotrimer of A, B and C subunits.

The enzyme catalyses L-glutamyl-tRNA(Gln) + L-glutamine + ATP + H2O = L-glutaminyl-tRNA(Gln) + L-glutamate + ADP + phosphate + H(+). It catalyses the reaction L-aspartyl-tRNA(Asn) + L-glutamine + ATP + H2O = L-asparaginyl-tRNA(Asn) + L-glutamate + ADP + phosphate + 2 H(+). In terms of biological role, allows the formation of correctly charged Asn-tRNA(Asn) or Gln-tRNA(Gln) through the transamidation of misacylated Asp-tRNA(Asn) or Glu-tRNA(Gln) in organisms which lack either or both of asparaginyl-tRNA or glutaminyl-tRNA synthetases. The reaction takes place in the presence of glutamine and ATP through an activated phospho-Asp-tRNA(Asn) or phospho-Glu-tRNA(Gln). This chain is Aspartyl/glutamyl-tRNA(Asn/Gln) amidotransferase subunit C, found in Bradyrhizobium diazoefficiens (strain JCM 10833 / BCRC 13528 / IAM 13628 / NBRC 14792 / USDA 110).